Reading from the N-terminus, the 554-residue chain is Heterochromatin protein 1-binding protein 3 (554 aa).

An N-acetylalanine modification is found at Ala-2. Ser-6 is modified (phosphoserine). Disordered regions lie at residues 30-136 (LGEK…KTIP) and 142-161 (SASQ…SPRP). Position 51 is a phosphothreonine (Thr-51). Residues 60–71 (GEEEKPEPDGSS) are compositionally biased toward acidic residues. Lys-64 is covalently cross-linked (Glycyl lysine isopeptide (Lys-Gly) (interchain with G-Cter in SUMO2)). Residues Glu-72 and Thr-85 each carry the phosphothreonine modification. The span at 72-93 (EESISTVEEQENETPPATSSEA) shows a compositional bias: polar residues. A compositionally biased stretch (basic and acidic residues) spans 94-129 (EQPKGEPESGEKEENNNKSAEEPKKDEKDQSKEKEK). Lys-97 participates in a covalent cross-link: Glycyl lysine isopeptide (Lys-Gly) (interchain with G-Cter in SUMO2). A compositionally biased stretch (polar residues) spans 142 to 156 (SASQLARAQRQTPMA). Phosphoserine occurs at positions 144, 157, and 158. In terms of domain architecture, H15 1 spans 159–234 (PRPKMDAILT…GASGSFVVVQ (76 aa)). Position 192 is an N6-acetyllysine (Lys-192). Positions 229 to 254 (SFVVVQKSKPPQKSKNRKKGSALDPE) are disordered. Basic residues predominate over residues 238 to 248 (PPQKSKNRKKG). A Phosphoserine modification is found at Ser-249. Residues 255–259 (PQVKL) carry the PxVxL motif motif. H15 domains are found at residues 255-330 (PQVK…QLKK) and 337-413 (LGGS…QLSF). Lys-258 is covalently cross-linked (Glycyl lysine isopeptide (Lys-Gly) (interchain with G-Cter in SUMO2)). The interval 420–554 (GVLFPKKESG…AMKKSFKTKK (135 aa)) is disordered. Positions 430–451 (GSDDEDEDDDDDESSEDSEDEE) are enriched in acidic residues. A phosphoserine mark is found at Ser-443, Ser-444, and Ser-447. Over residues 464-475 (AKSQGKTASMKQ) the composition is skewed to polar residues. Composition is skewed to basic residues over residues 490–511 (GKVR…RKAR) and 544–554 (SAMKKSFKTKK).

In terms of assembly, interacts (via PxVxL motif) with CBX5 (via Trp-174).

The protein resides in the nucleus. The protein localises to the chromosome. Component of heterochromatin that maintains heterochromatin integrity during G1/S progression and regulates the duration of G1 phase to critically influence cell proliferative capacity. May play a role in hypoxia-induced oncogenesis. The protein is Heterochromatin protein 1-binding protein 3 (Hp1bp3) of Mus musculus (Mouse).